We begin with the raw amino-acid sequence, 127 residues long: MGDKPIWEQIGSSFIQHYYQLFDNDRTQLGAIYIDASCLTWEGQQFQGKAAIVEKLSSLPFQKIQHSITAQDHQPTPDSCIISMVVGQLKADEDPIMGFHQMFLLKNINDAWVCTNDMFRLALHNFG.

Lys4 bears the N6-acetyllysine mark. One can recognise an NTF2 domain in the interval 10–121; the sequence is IGSSFIQHYY…WVCTNDMFRL (112 aa).

In terms of assembly, homodimer. Interacts with RAN (GDP-bound form); the interaction is direct and regulates RAN nuclear import. Interacts with the nucleoporins NUP54, NUP58 and NUP62 (via FG repeats); recruits NUTF2 to the nuclear pore complex a step required for NUTF2-mediated GDP-bound RAN nuclear import. Interacts with CAPG; mediates its nuclear import.

The protein localises to the cytoplasm. The protein resides in the cytosol. Its subcellular location is the nucleus outer membrane. It is found in the nucleus. It localises to the nuclear pore complex. The protein localises to the nucleus inner membrane. The protein resides in the nucleoplasm. Functionally, mediates the import of GDP-bound RAN from the cytoplasm into the nucleus which is essential for the function of RAN in cargo receptor-mediated nucleocytoplasmic transport. Thereby, plays indirectly a more general role in cargo receptor-mediated nucleocytoplasmic transport. Interacts with GDP-bound RAN in the cytosol, recruits it to the nuclear pore complex via its interaction with nucleoporins and promotes its nuclear import. The polypeptide is Nuclear transport factor 2 (Bos taurus (Bovine)).